Here is a 74-residue protein sequence, read N- to C-terminus: Histone H1.C8/H1.M1 (74 aa).

The interval 1 to 74 is disordered; sequence MSDAAVPPKK…KAVKKAPKKK (74 aa). Residues 11-74 are compositionally biased toward basic residues; it reads ASPKKAAAKK…KAVKKAPKKK (64 aa).

Its subcellular location is the nucleus. It localises to the chromosome. This Trypanosoma cruzi protein is Histone H1.C8/H1.M1.